We begin with the raw amino-acid sequence, 557 residues long: Leucine-rich glioma-inactivated protein 1 (557 aa).

Positions 1–34 are cleaved as a signal peptide; it reads MESERSKRMGNACIPLKRIAYFLCLLSALLLTEG. In terms of domain architecture, LRRNT spans 35-72; that stretch reads KKPAKPKCPAVCTCTKDNALCENARSIPRTVPPDVISL. 3 LRR repeats span residues 92–113, 116–137, and 140–161; these read SLQLLLFTSNSFDVISDDAFIG, HLEYLFIENNNIKSISRHTFRG, and SLIHLSLANNNLQTLPKDIFKG. Residues 173–223 form the LRRCT domain; it reads NSFNCDCKLKWLVEWLGHTNATVEDIYCEGPPEYKKRKINSLSSKDFDCII. Asparagine 192 carries an N-linked (GlcNAc...) asparagine glycan. EAR repeat units follow at residues 225-267, 271-313, 317-364, 366-415, 419-462, 464-506, and 510-552; these read EFAK…EWDH, TFRN…KRDS, KFIK…KWNG, GFYS…QWNK, SFTN…KWGG, SFQD…NWDA, and KFVK…KHVI. A glycan (N-linked (GlcNAc...) asparagine) is linked at asparagine 277. A glycan (N-linked (GlcNAc...) asparagine) is linked at asparagine 422.

As to quaternary structure, oligomer. Interacts with KCNA1 within a complex containing KCNA1, KCNA4 and KCNAB1. Part of a complex containing ADAM22, DLG4/PSD95 and CACNG2 (stargazin). Can bind to ADAM11 and ADAM23. In terms of processing, glycosylated.

It localises to the secreted. The protein localises to the synapse. It is found in the cytoplasm. Regulates voltage-gated potassium channels assembled from KCNA1, KCNA4 and KCNAB1. It slows down channel inactivation by precluding channel closure mediated by the KCNAB1 subunit. Ligand for ADAM22 that positively regulates synaptic transmission mediated by AMPA-type glutamate receptors. Plays a role in suppressing the production of MMP1/3 through the phosphatidylinositol 3-kinase/ERK pathway. This Pan troglodytes (Chimpanzee) protein is Leucine-rich glioma-inactivated protein 1 (LGI1).